The primary structure comprises 159 residues: 17 kDa surface antigen (159 aa).

Residues M1–A19 form the signal peptide. C20 carries the N-palmitoyl cysteine lipid modification. C20 is lipidated: S-diacylglycerol cysteine.

Belongs to the rickettsiale 17 kDa surface antigen family.

It is found in the cell outer membrane. This Rickettsia felis (strain ATCC VR-1525 / URRWXCal2) (Rickettsia azadi) protein is 17 kDa surface antigen (omp).